Here is a 430-residue protein sequence, read N- to C-terminus: Serine--tRNA ligase (430 aa).

237-239 (TAE) contributes to the L-serine binding site. 268-270 (RSE) provides a ligand contact to ATP. E291 serves as a coordination point for L-serine. 355 to 358 (EISS) provides a ligand contact to ATP. S391 serves as a coordination point for L-serine.

This sequence belongs to the class-II aminoacyl-tRNA synthetase family. Type-1 seryl-tRNA synthetase subfamily. As to quaternary structure, homodimer. The tRNA molecule binds across the dimer.

Its subcellular location is the cytoplasm. The enzyme catalyses tRNA(Ser) + L-serine + ATP = L-seryl-tRNA(Ser) + AMP + diphosphate + H(+). The catalysed reaction is tRNA(Sec) + L-serine + ATP = L-seryl-tRNA(Sec) + AMP + diphosphate + H(+). It participates in aminoacyl-tRNA biosynthesis; selenocysteinyl-tRNA(Sec) biosynthesis; L-seryl-tRNA(Sec) from L-serine and tRNA(Sec): step 1/1. Its function is as follows. Catalyzes the attachment of serine to tRNA(Ser). Is also able to aminoacylate tRNA(Sec) with serine, to form the misacylated tRNA L-seryl-tRNA(Sec), which will be further converted into selenocysteinyl-tRNA(Sec). The sequence is that of Serine--tRNA ligase from Citrobacter koseri (strain ATCC BAA-895 / CDC 4225-83 / SGSC4696).